Reading from the N-terminus, the 507-residue chain is Protoheme IX farnesyltransferase, mitochondrial (507 aa).

Low complexity predominate over residues 72–90; sequence STSASASTTHDSTLSSSPT. The interval 72–136 is disordered; it reads STSASASTTH…RGEKPLPPDA (65 aa). Over residues 99–111 the composition is skewed to basic residues; that stretch reads KDHKIAPHRKRQA. The next 8 membrane-spanning stretches (helical) occupy residues 166 to 186, 199 to 219, 248 to 268, 270 to 290, 298 to 318, 339 to 359, 392 to 412, and 441 to 461; these read LTMLVVLTAMATYALYPVPEM, PLTLLFLTIGTTFCSASANAL, AAVLFAILSGFVGTGALYFGV, PTVSGLGFANIVIYAGMYTPL, TWIGAVVGGIPPLMGWAAAAG, IGGWVMAGLLFAWQFPHFMAL, FVFIPLCLSLCAAGVTEWSFA, and GLFWASVWHLPGVMILALLHK.

The protein belongs to the UbiA prenyltransferase family.

The protein resides in the mitochondrion membrane. The enzyme catalyses heme b + (2E,6E)-farnesyl diphosphate + H2O = Fe(II)-heme o + diphosphate. In terms of biological role, converts protoheme IX and farnesyl diphosphate to heme O. This is Protoheme IX farnesyltransferase, mitochondrial (COX10) from Gibberella zeae (strain ATCC MYA-4620 / CBS 123657 / FGSC 9075 / NRRL 31084 / PH-1) (Wheat head blight fungus).